The chain runs to 277 residues: Glucose-6-phosphatase catalytic subunit 1 (277 aa).

Arg4 lines the substrate pocket. 2 helical membrane passes run 39–59 (GHAM…LSIA) and 67–87 (LLYR…ELVV). His40 acts as the Proton donor in catalysis. Position 91 (Arg91) interacts with substrate. His97 functions as the Nucleophile in the catalytic mechanism. Helical transmembrane passes span 131 to 151 (FLIT…LKAL), 215 to 235 (IGCI…TFSP), and 250 to 270 (AVAL…IYPV). Positions 274-277 (GKNL) match the Prevents secretion from ER motif.

This sequence belongs to the glucose-6-phosphatase family.

It is found in the endoplasmic reticulum membrane. The enzyme catalyses D-glucose 6-phosphate + H2O = D-glucose + phosphate. Its pathway is carbohydrate biosynthesis; gluconeogenesis. Hydrolyzes glucose-6-phosphate to glucose in the endoplasmic reticulum. Forms with the glucose-6-phosphate transporter (SLC37A4/G6PT) the complex responsible for glucose production in the terminal step of glycogenolysis and gluconeogenesis. Hence, it is the key enzyme in homeostatic regulation of blood glucose levels. The protein is Glucose-6-phosphatase catalytic subunit 1 (g6pc1) of Haplochromis xenognathus (Lake Victoria cichlid).